The following is a 359-amino-acid chain: Type II restriction enzyme HgiDI (359 aa).

It catalyses the reaction Endonucleolytic cleavage of DNA to give specific double-stranded fragments with terminal 5'-phosphates.. A P subtype restriction enzyme that recognizes the double-stranded sequence 5'-GRCGYC-3' and cleaves after R-2. This chain is Type II restriction enzyme HgiDI, found in Herpetosiphon aurantiacus (Herpetosiphon giganteus).